A 1059-amino-acid chain; its full sequence is Transmembrane protease serine 9 (1059 aa).

At 1–29 the chain is on the cytoplasmic side; that stretch reads MEPTVADVHLVPRTTKEVPALDAACCRAA. The helical; Signal-anchor for type II membrane protein transmembrane segment at 30-50 threads the bilayer; the sequence is SIGVVATSLVVLTLGVLLAFL. The Extracellular segment spans residues 51 to 1059; it reads STQGFHVDHT…RGWIGQHIQE (1009 aa). Residues 153–190 enclose the LDL-receptor class A domain; it reads RCPGNSFSCGNSQCVTKVNPECDDQEDCSDGSDEAHCE. 4 disulfide bridges follow: Cys154–Cys166, Cys161–Cys180, Cys174–Cys189, and Cys228–Cys244. Residues 203–436 enclose the Peptidase S1 1 domain; it reads IVGGMEASPG…LRDWILEATT (234 aa). Residues His243 and Asp292 each act as charge relay system in the active site. 3 disulfides stabilise this stretch: Cys326–Cys393, Cys358–Cys372, and Cys383–Cys412. Residue Ser387 is the Charge relay system of the active site. The disordered stretch occupies residues 443–469; sequence APTMAPAPAAPSTAWPTSPESPVVSTP. Residues 504–736 form the Peptidase S1 2 domain; sequence VVGGFGAASG…LKGWILEIMS (233 aa). Cys529 and Cys545 are joined by a disulfide. His544 acts as the Charge relay system in catalysis. An N-linked (GlcNAc...) asparagine glycan is attached at Asn547. Asp592 acts as the Charge relay system in catalysis. Cystine bridges form between Cys626/Cys693, Cys658/Cys672, and Cys683/Cys712. N-linked (GlcNAc...) asparagine glycans are attached at residues Asn638 and Asn663. Ser687 acts as the Charge relay system in catalysis. A disordered region spans residues 758 to 814; the sequence is TTAGLTVPGATPSRPTPGAASRVTGQPANSTLSAVSTTARGQTPFPDAPEATTHTQL. Polar residues predominate over residues 780 to 798; it reads VTGQPANSTLSAVSTTARG. The N-linked (GlcNAc...) asparagine glycan is linked to Asn786. In terms of domain architecture, Peptidase S1 3 spans 827–1058; it reads IVGGSAAGRG…VRGWIGQHIQ (232 aa). 4 disulfide bridges follow: Cys853-Cys869, Cys949-Cys1015, Cys980-Cys994, and Cys1005-Cys1034.

The protein belongs to the peptidase S1 family. In terms of processing, proteolytically cleaved to generate 3 independent serine protease chains. The cleaved chains may remain attached to the membrane thanks to disulfide bonds. It is unclear whether cleavage always takes place. Expressed in fetal human tissues, such as kidney, liver, lung and brain, and in a variety of tumor cell lines. Weakly expressed in adult tissues including skeletal muscle, liver, placenta and heart.

Its subcellular location is the cell membrane. Its activity is regulated as follows. Inhibited by serine protease inhibitors PMSF and 4-(2-aminoethyl)benzenesulfonyl fluoride, but not by EDTA. In terms of biological role, serase-1 and serase-2 are serine proteases that hydrolyze the peptides N-t-Boc-Gln-Ala-Arg-AMC and N-t-Boc-Gln-Gly-Arg-AMC. In contrast, N-t-Boc-Ala-Phe-Lys-AMC and N-t-Boc-Ala-Pro-Ala-AMC are not significantly hydrolyzed. In Homo sapiens (Human), this protein is Transmembrane protease serine 9 (TMPRSS9).